Consider the following 247-residue polypeptide: 3-oxoacyl-[acyl-carrier-protein] reductase (247 aa).

Position 11-35 (11-35 (VTGASRGIGKATALALAATGMKVVV)) interacts with NADP(+). Substrate is bound at residue serine 143. Tyrosine 156 functions as the Proton acceptor in the catalytic mechanism.

The protein belongs to the short-chain dehydrogenases/reductases (SDR) family.

The enzyme catalyses a (3R)-hydroxyacyl-[ACP] + NADP(+) = a 3-oxoacyl-[ACP] + NADPH + H(+). Its pathway is lipid metabolism; fatty acid biosynthesis. In terms of biological role, catalyzes the NADPH-dependent reduction of beta-ketoacyl-ACP substrates to beta-hydroxyacyl-ACP products, the first reductive step in the elongation cycle of fatty acid biosynthesis. Is capable of reducing acetoacetyl-CoA, but less well than its paralog PhaB. This chain is 3-oxoacyl-[acyl-carrier-protein] reductase (fabG), found in Synechocystis sp. (strain ATCC 27184 / PCC 6803 / Kazusa).